Here is a 496-residue protein sequence, read N- to C-terminus: Endoglucanase (496 aa).

Positions 1–23 (MGYHSVFIAVFLWSSMVCHNGLA) are cleaved as a signal peptide. D93 functions as the Nucleophile in the catalytic mechanism. Active-site residues include H415, D467, and E476.

This sequence belongs to the glycosyl hydrolase 9 (cellulase E) family.

It carries out the reaction Endohydrolysis of (1-&gt;4)-beta-D-glucosidic linkages in cellulose, lichenin and cereal beta-D-glucans.. Functionally, involved in ripening fruit process. This is Endoglucanase from Phaseolus vulgaris (Kidney bean).